The following is a 508-amino-acid chain: WD repeat-containing protein JIP5 (508 aa).

WD repeat units lie at residues 46–94 (LATG…GVET), 105–144 (RHKGSVRCICFDADGTHIYSVGTDNVLKKADTLTGKVVKK), 150–189 (GQNVKYTKLVKSATHPLVLLGDENGNVTVLNSESLEQTNL), 194–234 (HNGD…EGDF), 252–293 (DQED…LADQ), and 344–381 (SKLDEVTFLDLDSEYRLLSGGLDKAKLWDSEKSEQLTP). Positions 372-508 (DSEKSEQLTP…THGIRRFEGL (137 aa)) are disordered. The span at 491–508 (IKPERSMKTHGIRRFEGL) shows a compositional bias: basic and acidic residues.

The protein belongs to the WD repeat WDR55 family.

The protein localises to the nucleus. The protein resides in the nucleolus. This chain is WD repeat-containing protein JIP5 (JIP5), found in Eremothecium gossypii (strain ATCC 10895 / CBS 109.51 / FGSC 9923 / NRRL Y-1056) (Yeast).